Reading from the N-terminus, the 82-residue chain is MKREQIEGVAEDLAGKAQSAVGRLVEDPALEAEGDARQAAGQVTKTYGDTLDTVSSFVKEKPFAALAITAAVTLVVSRLLRR.

Belongs to the UPF0337 (CsbD) family.

The polypeptide is UPF0337 protein PP_2059 (Pseudomonas putida (strain ATCC 47054 / DSM 6125 / CFBP 8728 / NCIMB 11950 / KT2440)).